A 131-amino-acid chain; its full sequence is Small ribosomal subunit protein uS8 (131 aa).

The protein belongs to the universal ribosomal protein uS8 family. Part of the 30S ribosomal subunit. Contacts proteins S5 and S12.

One of the primary rRNA binding proteins, it binds directly to 16S rRNA central domain where it helps coordinate assembly of the platform of the 30S subunit. This is Small ribosomal subunit protein uS8 from Campylobacter jejuni subsp. doylei (strain ATCC BAA-1458 / RM4099 / 269.97).